A 383-amino-acid polypeptide reads, in one-letter code: Hydroxymethylglutaryl-CoA synthase (383 aa).

Asp-29 is a binding site for (3S)-3-hydroxy-3-methylglutaryl-CoA. Glu-79 (proton donor/acceptor) is an active-site residue. Positions 111, 152, 201, 233, 242, 275, and 308 each coordinate (3S)-3-hydroxy-3-methylglutaryl-CoA. Cys-111 acts as the Acyl-thioester intermediate in catalysis. His-233 serves as the catalytic Proton donor/acceptor.

It belongs to the thiolase-like superfamily. HMG-CoA synthase family. In terms of assembly, homodimer.

It carries out the reaction acetoacetyl-CoA + acetyl-CoA + H2O = (3S)-3-hydroxy-3-methylglutaryl-CoA + CoA + H(+). It functions in the pathway metabolic intermediate biosynthesis; (R)-mevalonate biosynthesis; (R)-mevalonate from acetyl-CoA: step 2/3. Is sensitive to feedback substrate inhibition by acetoacetyl-CoA. Is inactivated by hymeglusin, which also blocks the growth of E.faecalis, indicating the critical role that the mevalonate pathway plays in isoprenoid biosynthesis. Catalyzes the condensation of acetyl-CoA with acetoacetyl-CoA to form 3-hydroxy-3-methylglutaryl-CoA (HMG-CoA). Functions in the mevalonate (MVA) pathway leading to isopentenyl diphosphate (IPP), a key precursor for the biosynthesis of isoprenoid compounds. The polypeptide is Hydroxymethylglutaryl-CoA synthase (mvaS) (Enterococcus faecalis (Streptococcus faecalis)).